The following is a 341-amino-acid chain: Phosphate acyltransferase (341 aa).

The protein belongs to the PlsX family. As to quaternary structure, homodimer. Probably interacts with PlsY.

It is found in the cytoplasm. The enzyme catalyses a fatty acyl-[ACP] + phosphate = an acyl phosphate + holo-[ACP]. Its pathway is lipid metabolism; phospholipid metabolism. Its function is as follows. Catalyzes the reversible formation of acyl-phosphate (acyl-PO(4)) from acyl-[acyl-carrier-protein] (acyl-ACP). This enzyme utilizes acyl-ACP as fatty acyl donor, but not acyl-CoA. This is Phosphate acyltransferase from Vibrio atlanticus (strain LGP32) (Vibrio splendidus (strain Mel32)).